Reading from the N-terminus, the 383-residue chain is 4-hydroxy-3-methylbut-2-en-1-yl diphosphate synthase (flavodoxin) (383 aa).

Residues cysteine 277, cysteine 280, cysteine 312, and glutamate 319 each coordinate [4Fe-4S] cluster.

It belongs to the IspG family. The cofactor is [4Fe-4S] cluster.

It carries out the reaction (2E)-4-hydroxy-3-methylbut-2-enyl diphosphate + oxidized [flavodoxin] + H2O + 2 H(+) = 2-C-methyl-D-erythritol 2,4-cyclic diphosphate + reduced [flavodoxin]. Its pathway is isoprenoid biosynthesis; isopentenyl diphosphate biosynthesis via DXP pathway; isopentenyl diphosphate from 1-deoxy-D-xylulose 5-phosphate: step 5/6. Its function is as follows. Converts 2C-methyl-D-erythritol 2,4-cyclodiphosphate (ME-2,4cPP) into 1-hydroxy-2-methyl-2-(E)-butenyl 4-diphosphate. The chain is 4-hydroxy-3-methylbut-2-en-1-yl diphosphate synthase (flavodoxin) from Caulobacter vibrioides (strain ATCC 19089 / CIP 103742 / CB 15) (Caulobacter crescentus).